A 506-amino-acid chain; its full sequence is Pyruvate kinase 2 (506 aa).

Residue serine 24 is modified to Phosphoserine. Residue arginine 51 participates in substrate binding. Asparagine 53, serine 55, aspartate 86, and threonine 87 together coordinate K(+). 53 to 56 (NFSH) provides a ligand contact to ATP. Positions 93 and 179 each coordinate ATP. Position 244 (glutamate 244) interacts with Mg(2+). Substrate-binding residues include glycine 267, aspartate 268, and threonine 300. Aspartate 268 serves as a coordination point for Mg(2+).

This sequence belongs to the pyruvate kinase family. In terms of assembly, homotetramer. It depends on Mg(2+) as a cofactor. Requires K(+) as cofactor.

It catalyses the reaction pyruvate + ATP = phosphoenolpyruvate + ADP + H(+). The protein operates within carbohydrate degradation; glycolysis; pyruvate from D-glyceraldehyde 3-phosphate: step 5/5. Its activity is regulated as follows. Not activated by fructose-1,6-bisphosphate. May be used by cells under conditions in which the level of glycolytic flux is very low. The sequence is that of Pyruvate kinase 2 (PYK2) from Saccharomyces cerevisiae (strain ATCC 204508 / S288c) (Baker's yeast).